We begin with the raw amino-acid sequence, 475 residues long: Divinyl ether synthase CYP74M1 (475 aa).

Cys427 is a binding site for heme.

This sequence belongs to the cytochrome P450 family. It depends on heme as a cofactor.

The enzyme catalyses (13S)-hydroperoxy-(9Z,11E)-octadecadienoate = etheroleate + H2O. It carries out the reaction (13S)-hydroperoxy-(9Z,11E,15Z)-octadecatrienoate = etherolenate + H2O. Its pathway is lipid metabolism; oxylipin biosynthesis. In terms of biological role, divinyl ether synthase involved in oxylipin biosynthesis. Catalyzes the conversion of (13S)-hydroperoxy-(9Z,11E)-octadecadienoate (13-HPOD) to etheroleate and (13S)-hydroperoxy-(9Z,11E,15Z)-octadecatrienoate (13-HPOT) to etherolenate. Has no activity with the corresponding 9-hydroperoxides (9-HPOD and 9-HPOT). In Selaginella moellendorffii (Spikemoss), this protein is Divinyl ether synthase CYP74M1.